The following is a 160-amino-acid chain: Endoribonuclease YbeY (160 aa).

Zn(2+)-binding residues include His-125, His-129, and His-135.

Belongs to the endoribonuclease YbeY family. The cofactor is Zn(2+).

It localises to the cytoplasm. In terms of biological role, single strand-specific metallo-endoribonuclease involved in late-stage 70S ribosome quality control and in maturation of the 3' terminus of the 16S rRNA. This is Endoribonuclease YbeY from Leuconostoc mesenteroides subsp. mesenteroides (strain ATCC 8293 / DSM 20343 / BCRC 11652 / CCM 1803 / JCM 6124 / NCDO 523 / NBRC 100496 / NCIMB 8023 / NCTC 12954 / NRRL B-1118 / 37Y).